The sequence spans 189 residues: MALSFSLLMAVLVLSYKSICSLGCDLPQTHSLGNRRALILLAQMGRISHFSCLKDRYDFGFPQEVFDGNQFQKAQAISAFHEMIQQTFNLFSTKDSSAAWDETLLDKFYIELFQQLNDLEACVTQEVGVEEIALMNEDSILAVRKYFQRITLYLMGKKYSPCAWEVVRAEIMRSFSFSTNLQKGLRRKD.

The first 23 residues, 1–23 (MALSFSLLMAVLVLSYKSICSLG), serve as a signal peptide directing secretion. 2 cysteine pairs are disulfide-bonded: C24–C122 and C52–C162.

This sequence belongs to the alpha/beta interferon family.

It is found in the secreted. Its function is as follows. Produced by macrophages, IFN-alpha have antiviral activities. Interferon stimulates the production of two enzymes: a protein kinase and an oligoadenylate synthetase. The sequence is that of Interferon alpha-16 (IFNA16) from Homo sapiens (Human).